Consider the following 375-residue polypeptide: N5-carboxyaminoimidazole ribonucleotide synthase (375 aa).

ATP-binding positions include R108, K148, 153–159 (GYDGKGQ), 183–186 (EQYL), E191, H214, and 268–269 (NE). Residues 112–298 (KQTLQDSGSN…QFDTHIKAIT (187 aa)) form the ATP-grasp domain.

This sequence belongs to the PurK/PurT family. As to quaternary structure, homodimer.

It carries out the reaction 5-amino-1-(5-phospho-beta-D-ribosyl)imidazole + hydrogencarbonate + ATP = 5-carboxyamino-1-(5-phospho-D-ribosyl)imidazole + ADP + phosphate + 2 H(+). It functions in the pathway purine metabolism; IMP biosynthesis via de novo pathway; 5-amino-1-(5-phospho-D-ribosyl)imidazole-4-carboxylate from 5-amino-1-(5-phospho-D-ribosyl)imidazole (N5-CAIR route): step 1/2. In terms of biological role, catalyzes the ATP-dependent conversion of 5-aminoimidazole ribonucleotide (AIR) and HCO(3)(-) to N5-carboxyaminoimidazole ribonucleotide (N5-CAIR). This is N5-carboxyaminoimidazole ribonucleotide synthase from Staphylococcus saprophyticus subsp. saprophyticus (strain ATCC 15305 / DSM 20229 / NCIMB 8711 / NCTC 7292 / S-41).